We begin with the raw amino-acid sequence, 80 residues long: ATP synthase subunit c (80 aa).

2 consecutive transmembrane segments (helical) span residues 11–31 (IAAAMMMGLAAIGASIGIGIL) and 53–73 (FFIVMGLVDAIPMIAVGLGLY).

Belongs to the ATPase C chain family. In terms of assembly, F-type ATPases have 2 components, F(1) - the catalytic core - and F(0) - the membrane proton channel. F(1) has five subunits: alpha(3), beta(3), gamma(1), delta(1), epsilon(1). F(0) has three main subunits: a(1), b(2) and c(10-14). The alpha and beta chains form an alternating ring which encloses part of the gamma chain. F(1) is attached to F(0) by a central stalk formed by the gamma and epsilon chains, while a peripheral stalk is formed by the delta and b chains.

The protein resides in the cell inner membrane. F(1)F(0) ATP synthase produces ATP from ADP in the presence of a proton or sodium gradient. F-type ATPases consist of two structural domains, F(1) containing the extramembraneous catalytic core and F(0) containing the membrane proton channel, linked together by a central stalk and a peripheral stalk. During catalysis, ATP synthesis in the catalytic domain of F(1) is coupled via a rotary mechanism of the central stalk subunits to proton translocation. Its function is as follows. Key component of the F(0) channel; it plays a direct role in translocation across the membrane. A homomeric c-ring of between 10-14 subunits forms the central stalk rotor element with the F(1) delta and epsilon subunits. In Aeromonas hydrophila subsp. hydrophila (strain ATCC 7966 / DSM 30187 / BCRC 13018 / CCUG 14551 / JCM 1027 / KCTC 2358 / NCIMB 9240 / NCTC 8049), this protein is ATP synthase subunit c.